Consider the following 1367-residue polypeptide: Protein patched homolog 3 (1367 aa).

Residues methionine 1–glutamine 97 are Cytoplasmic-facing. A helical membrane pass occupies residues arginine 98 to leucine 118. Over arginine 119 to glutamine 625 the chain is Extracellular. N-linked (GlcNAc...) asparagine glycosylation is found at asparagine 235, asparagine 310, asparagine 454, and asparagine 591. The chain crosses the membrane as a helical span at residues phenylalanine 626 to glutamine 646. Residues asparagine 627–isoleucine 788 enclose the SSD domain. Residues glycine 647 to asparagine 659 are Cytoplasmic-facing. A helical transmembrane segment spans residues valine 660–phenylalanine 680. The Extracellular segment spans residues alanine 681–glutamine 694. Residues valine 695 to tyrosine 715 traverse the membrane as a helical segment. Residues aspartate 716–serine 737 are Cytoplasmic-facing. The chain crosses the membrane as a helical span at residues valine 738–proline 758. The Extracellular portion of the chain corresponds to alanine 759–threonine 767. Residues alanine 768–isoleucine 788 form a helical membrane-spanning segment. The Cytoplasmic segment spans residues aspartate 789 to asparagine 863. The helical transmembrane segment at valine 864–methionine 884 threads the bilayer. The Extracellular segment spans residues tyrosine 885–asparagine 1143. A helical membrane pass occupies residues leucine 1144–phenylalanine 1164. Residues asparagine 1165–leucine 1171 are Cytoplasmic-facing. Residues isoleucine 1172–isoleucine 1192 traverse the membrane as a helical segment. Topologically, residues lysine 1193 to alanine 1199 are extracellular. Residues valine 1200 to phenylalanine 1220 traverse the membrane as a helical segment. At leucine 1221 to histidine 1237 the chain is on the cytoplasmic side. A helical transmembrane segment spans residues methionine 1238–phenylalanine 1258. Over serine 1259 to threonine 1273 the chain is Extracellular. Residues leucine 1274–valine 1294 traverse the membrane as a helical segment. The Cytoplasmic segment spans residues glycine 1295–lysine 1367. A disordered region spans residues proline 1302 to lysine 1367. The segment covering arginine 1346–histidine 1356 has biased composition (low complexity).

It belongs to the patched family. In males, expressed in the precursor and mature sensory rays, the cloaca, and pre-anal ganglia and cephalic neurons. Also expressed in five cells in the valve region between the seminal vesicle and vas deferens of the somatic gonad.

The protein resides in the apical cell membrane. The protein localises to the cell junction. It localises to the adherens junction. Its function is as follows. Regulates osmosis during embryonic development. Required for larval development and in particular is involved in larval molting. The protein is Protein patched homolog 3 of Caenorhabditis elegans.